The sequence spans 500 residues: Lysine--tRNA ligase (500 aa).

Positions 410 and 417 each coordinate Mg(2+).

Belongs to the class-II aminoacyl-tRNA synthetase family. Homodimer. The cofactor is Mg(2+).

It is found in the cytoplasm. The enzyme catalyses tRNA(Lys) + L-lysine + ATP = L-lysyl-tRNA(Lys) + AMP + diphosphate. This is Lysine--tRNA ligase from Pseudomonas putida (strain W619).